A 179-amino-acid polypeptide reads, in one-letter code: Large ribosomal subunit protein uL5 (179 aa).

The protein belongs to the universal ribosomal protein uL5 family. Part of the 50S ribosomal subunit; part of the 5S rRNA/L5/L18/L25 subcomplex. Contacts the 5S rRNA and the P site tRNA. Forms a bridge to the 30S subunit in the 70S ribosome.

In terms of biological role, this is one of the proteins that bind and probably mediate the attachment of the 5S RNA into the large ribosomal subunit, where it forms part of the central protuberance. In the 70S ribosome it contacts protein S13 of the 30S subunit (bridge B1b), connecting the 2 subunits; this bridge is implicated in subunit movement. Contacts the P site tRNA; the 5S rRNA and some of its associated proteins might help stabilize positioning of ribosome-bound tRNAs. The polypeptide is Large ribosomal subunit protein uL5 (Geotalea daltonii (strain DSM 22248 / JCM 15807 / FRC-32) (Geobacter daltonii)).